A 512-amino-acid chain; its full sequence is Photosystem II CP47 reaction center protein (512 aa).

6 consecutive transmembrane segments (helical) span residues 21–36 (AVHL…WAGS), 101–115 (IVLS…IWHW), 140–156 (GIHL…FGAF), 203–218 (IAAG…FHLS), 237–252 (VLSS…AFVV), and 457–472 (TFAL…HGAR).

The protein belongs to the PsbB/PsbC family. PsbB subfamily. As to quaternary structure, PSII is composed of 1 copy each of membrane proteins PsbA, PsbB, PsbC, PsbD, PsbE, PsbF, PsbH, PsbI, PsbJ, PsbK, PsbL, PsbM, PsbT, PsbX, PsbY, PsbZ, Psb30/Ycf12, at least 3 peripheral proteins of the oxygen-evolving complex and a large number of cofactors. It forms dimeric complexes. Binds multiple chlorophylls. PSII binds additional chlorophylls, carotenoids and specific lipids. is required as a cofactor.

The protein resides in the plastid. It localises to the chloroplast thylakoid membrane. One of the components of the core complex of photosystem II (PSII). It binds chlorophyll and helps catalyze the primary light-induced photochemical processes of PSII. PSII is a light-driven water:plastoquinone oxidoreductase, using light energy to abstract electrons from H(2)O, generating O(2) and a proton gradient subsequently used for ATP formation. This Physcomitrium patens (Spreading-leaved earth moss) protein is Photosystem II CP47 reaction center protein.